A 144-amino-acid chain; its full sequence is Snaclec coagulation factor IX/factor X-binding protein subunit B1 (144 aa).

Residues 1 to 23 (MGRFIFVSFGLLVVFLSLSGTAA) form the signal peptide. 3 cysteine pairs are disulfide-bonded: Cys-25-Cys-36, Cys-53-Cys-142, and Cys-119-Cys-134. The C-type lectin domain maps to 32 to 143 (YEGHCYKPFN…CRMMANFVCE (112 aa)).

Belongs to the snaclec family. As to quaternary structure, heterodimer of subunits A and B1; disulfide-linked. In terms of tissue distribution, expressed by the venom gland.

The protein localises to the secreted. Functionally, anticoagulant protein which binds to the gamma-carboxyglutamic acid-domain regions of factors IX (F9) and factor X (F10) in the presence of calcium with a 1 to 1 stoichiometry. This Trimeresurus stejnegeri (Chinese green tree viper) protein is Snaclec coagulation factor IX/factor X-binding protein subunit B1.